A 359-amino-acid polypeptide reads, in one-letter code: UbiA prenyltransferase domain-containing protein 1 homolog (359 aa).

Residues 1–16 (MATSSQLLPNGNLSRN) are compositionally biased toward polar residues. Residues 1–23 (MATSSQLLPNGNLSRNGKTKTED) are disordered. 8 helical membrane-spanning segments follow: residues 67–89 (ALRP…LAYR), 98–118 (LATF…GNVV), 148–168 (VVSL…LLAV), 177–197 (LALI…GIGF), 200–220 (IALG…LFAF), 262–284 (IVTL…LLFA), 289–311 (FFIF…PQAF), and 335–355 (FFFG…PTFG).

The protein belongs to the UbiA prenyltransferase family.

Its subcellular location is the mitochondrion membrane. Its pathway is quinol/quinone metabolism; menaquinone biosynthesis. Functionally, prenyltransferase that mediates the formation of menaquinone-4 (MK-4), a vitamin K2 isoform, thereby acting as a mitochondrial electron carrier. Mediates the conversion of phylloquinone (PK) into MK-4, probably by cleaving the side chain of phylloquinone (PK) to release 2-methyl-1,4-naphthoquinone (menadione; K3) and then prenylating it with geranylgeranyl pyrophosphate (GGPP) to form MK-4. MK-4 acts as a membrane electron carrier downstream of a electron transport chain complex, improving mitochondrial oxygen consumption. The sequence is that of UbiA prenyltransferase domain-containing protein 1 homolog (heix) from Drosophila melanogaster (Fruit fly).